The primary structure comprises 446 residues: Dual specificity mitogen-activated protein kinase kinase 2 (446 aa).

Over residues 27-42 the composition is skewed to low complexity; that stretch reads SSGSSAGLGFQGQSQQ. The segment at 27–51 is disordered; that stretch reads SSGSSAGLGFQGQSQQHSTVNSMQG. Residues 149-414 form the Protein kinase domain; it reads LKDLGEIGRG…YKELLKHPFI (266 aa). ATP-binding positions include 155–163 and K178; that span reads IGRGAYGSV. The Proton acceptor role is filled by D276. Position 304 is a phosphoserine; by RAF (S304). T308 is subject to Phosphothreonine; by RAF.

It belongs to the protein kinase superfamily. STE Ser/Thr protein kinase family. MAP kinase kinase subfamily. Post-translationally, MAPKK is itself dependent on Ser/Thr phosphorylation for activity catalyzed by MAP kinase kinase kinases. In terms of tissue distribution, expressed abundantly in the adult brain and muscle.

It catalyses the reaction L-seryl-[protein] + ATP = O-phospho-L-seryl-[protein] + ADP + H(+). It carries out the reaction L-threonyl-[protein] + ATP = O-phospho-L-threonyl-[protein] + ADP + H(+). The catalysed reaction is L-tyrosyl-[protein] + ATP = O-phospho-L-tyrosyl-[protein] + ADP + H(+). In terms of biological role, catalyzes the concomitant phosphorylation of a threonine and a tyrosine residue in a Thr-Glu-Tyr sequence located in MAP kinases. This Xenopus laevis (African clawed frog) protein is Dual specificity mitogen-activated protein kinase kinase 2 (map2k2).